The chain runs to 261 residues: Complex I assembly factor TIMMDC1, mitochondrial (261 aa).

The next 3 helical transmembrane spans lie at 67–87 (LNSVYQAGFLGFLIGAIYGGV), 131–151 (WGWRVGLFTTSYFGIITCMSV), and 183–203 (AGGIIGGFLGGVAGVTSLLLM).

Belongs to the Tim17/Tim22/Tim23 family. As to quaternary structure, associates with complex I assembly intermediates during its biogenesis in a NdufAF3 and NdufAF4 dependent manner.

It is found in the membrane. Chaperone protein involved in the assembly of the mitochondrial NADH:ubiquinone oxidoreductase complex (complex I). Essential for viability. This is Complex I assembly factor TIMMDC1, mitochondrial from Drosophila melanogaster (Fruit fly).